The chain runs to 105 residues: Large ribosomal subunit protein uL24 (105 aa).

It belongs to the universal ribosomal protein uL24 family. Part of the 50S ribosomal subunit.

Its function is as follows. One of two assembly initiator proteins, it binds directly to the 5'-end of the 23S rRNA, where it nucleates assembly of the 50S subunit. In terms of biological role, one of the proteins that surrounds the polypeptide exit tunnel on the outside of the subunit. The chain is Large ribosomal subunit protein uL24 from Dictyoglomus turgidum (strain DSM 6724 / Z-1310).